Reading from the N-terminus, the 206-residue chain is MIAKLTGLLDSTGLDWAIVDVGGVGYLVSASARTLRRLAAPGEAVSLLTEMWVSEDNIQLFGFADTEERDWFRLLTTVQGVGARVALNLLSALSPAELTNSIAAQDRTALCQADGVGPKLAARILNELKEKVASFGAPAPAAATAGKGGAAPAGPAGAVADAVSALVNLGYRRVEAFTAVNAVAQRLGPEAGVSDLIRAGLKELSP.

The domain I stretch occupies residues 1-64; the sequence is MIAKLTGLLD…EDNIQLFGFA (64 aa). Residues 65–143 are domain II; it reads DTEERDWFRL…SFGAPAPAAA (79 aa). The interval 144–154 is flexible linker; it reads TAGKGGAAPAG. Residues 154 to 206 are domain III; sequence GPAGAVADAVSALVNLGYRRVEAFTAVNAVAQRLGPEAGVSDLIRAGLKELSP.

This sequence belongs to the RuvA family. As to quaternary structure, homotetramer. Forms an RuvA(8)-RuvB(12)-Holliday junction (HJ) complex. HJ DNA is sandwiched between 2 RuvA tetramers; dsDNA enters through RuvA and exits via RuvB. An RuvB hexamer assembles on each DNA strand where it exits the tetramer. Each RuvB hexamer is contacted by two RuvA subunits (via domain III) on 2 adjacent RuvB subunits; this complex drives branch migration. In the full resolvosome a probable DNA-RuvA(4)-RuvB(12)-RuvC(2) complex forms which resolves the HJ.

It localises to the cytoplasm. Its function is as follows. The RuvA-RuvB-RuvC complex processes Holliday junction (HJ) DNA during genetic recombination and DNA repair, while the RuvA-RuvB complex plays an important role in the rescue of blocked DNA replication forks via replication fork reversal (RFR). RuvA specifically binds to HJ cruciform DNA, conferring on it an open structure. The RuvB hexamer acts as an ATP-dependent pump, pulling dsDNA into and through the RuvAB complex. HJ branch migration allows RuvC to scan DNA until it finds its consensus sequence, where it cleaves and resolves the cruciform DNA. The chain is Holliday junction branch migration complex subunit RuvA from Rhodospirillum centenum (strain ATCC 51521 / SW).